The primary structure comprises 157 residues: Probable succinate transporter subunit YjjB (157 aa).

Helical transmembrane passes span 8 to 28, 50 to 70, 87 to 107, and 129 to 149; these read LALA…AMVF, MILM…SMLV, VFTV…TAMI, and FLTA…PGLW.

The protein belongs to the ThrE exporter (TC 2.A.79) family. As to quaternary structure, the transporter is composed of YjjB and YjjP.

Its subcellular location is the cell inner membrane. Its function is as follows. Involved in succinate export with YjjP. Both proteins are required for export. This chain is Probable succinate transporter subunit YjjB, found in Escherichia coli O127:H6 (strain E2348/69 / EPEC).